Consider the following 312-residue polypeptide: tRNA dimethylallyltransferase (312 aa).

Position 11–18 (11–18 (GLTATGKT)) interacts with ATP. 13-18 (TATGKT) contributes to the substrate binding site. An interaction with substrate tRNA region spans residues 36 to 39 (DSMC).

Belongs to the IPP transferase family. Monomer. Mg(2+) serves as cofactor.

The catalysed reaction is adenosine(37) in tRNA + dimethylallyl diphosphate = N(6)-dimethylallyladenosine(37) in tRNA + diphosphate. Its function is as follows. Catalyzes the transfer of a dimethylallyl group onto the adenine at position 37 in tRNAs that read codons beginning with uridine, leading to the formation of N6-(dimethylallyl)adenosine (i(6)A). The chain is tRNA dimethylallyltransferase from Caldicellulosiruptor bescii (strain ATCC BAA-1888 / DSM 6725 / KCTC 15123 / Z-1320) (Anaerocellum thermophilum).